We begin with the raw amino-acid sequence, 371 residues long: uncharacterized protein (371 aa).

The EH domain maps to 43–148 (DESRVPKFYL…VQAFPTASNP (106 aa)). Residues 179 to 205 (SMRKKKESDSKEVSAHNSPAKGAAHDL) are disordered.

This is an uncharacterized protein from Caenorhabditis elegans.